We begin with the raw amino-acid sequence, 199 residues long: ATP synthase subunit a (199 aa).

The next 6 helical transmembrane spans lie at 2-22 (TNVY…LFYF), 25-45 (SMLG…FSYT), 53-73 (VISV…YFMY), 80-100 (MIEF…LTFI), 143-163 (VNVL…ELYL), and 164-184 (GIFY…VFFI).

It belongs to the ATPase A chain family. In terms of assembly, F-type ATPases have 2 components, CF(1) - the catalytic core - and CF(0) - the membrane proton channel. CF(1) has five subunits: alpha(3), beta(3), gamma(1), delta(1), epsilon(1). CF(0) has three main subunits: a, b and c.

Its subcellular location is the mitochondrion inner membrane. Mitochondrial membrane ATP synthase (F(1)F(0) ATP synthase or Complex V) produces ATP from ADP in the presence of a proton gradient across the membrane which is generated by electron transport complexes of the respiratory chain. F-type ATPases consist of two structural domains, F(1) - containing the extramembraneous catalytic core and F(0) - containing the membrane proton channel, linked together by a central stalk and a peripheral stalk. During catalysis, ATP synthesis in the catalytic domain of F(1) is coupled via a rotary mechanism of the central stalk subunits to proton translocation. Key component of the proton channel; it may play a direct role in the translocation of protons across the membrane. The protein is ATP synthase subunit a (ATP6) of Ascaris suum (Pig roundworm).